The sequence spans 176 residues: NAD(P)H-quinone oxidoreductase subunit J (176 aa).

This sequence belongs to the complex I 30 kDa subunit family. In terms of assembly, NDH-1 can be composed of about 15 different subunits; different subcomplexes with different compositions have been identified which probably have different functions.

It localises to the cellular thylakoid membrane. The catalysed reaction is a plastoquinone + NADH + (n+1) H(+)(in) = a plastoquinol + NAD(+) + n H(+)(out). It carries out the reaction a plastoquinone + NADPH + (n+1) H(+)(in) = a plastoquinol + NADP(+) + n H(+)(out). NDH-1 shuttles electrons from an unknown electron donor, via FMN and iron-sulfur (Fe-S) centers, to quinones in the respiratory and/or the photosynthetic chain. The immediate electron acceptor for the enzyme in this species is believed to be plastoquinone. Couples the redox reaction to proton translocation, and thus conserves the redox energy in a proton gradient. Cyanobacterial NDH-1 also plays a role in inorganic carbon-concentration. The protein is NAD(P)H-quinone oxidoreductase subunit J of Prochlorococcus marinus (strain MIT 9515).